A 456-amino-acid chain; its full sequence is Bestrophin homolog 18 (456 aa).

Transmembrane regions (helical) follow at residues 29–49, 83–103, 234–254, and 267–287; these read WSAIWIQYSVWLGLYFLVSAI, GFFIAGVLRRFWYLYDIIGFI, IIYPTIVCLAVHMYFFVGILA, and MIDLVFPFMTSIQFVFYMGWL. The segment at 416 to 456 is disordered; it reads ASSSRSLERQRSPGSFRMETLTPGSPTNTPIEPIDKIDKKK.

This sequence belongs to the anion channel-forming bestrophin (TC 1.A.46) family. Calcium-sensitive chloride channel subfamily. As to quaternary structure, forms oligomers.

It localises to the cell membrane. In terms of biological role, forms chloride channels. This Caenorhabditis elegans protein is Bestrophin homolog 18 (best-18).